Here is a 324-residue protein sequence, read N- to C-terminus: Melanoma-associated antigen B16 (324 aa).

Residues 1–15 (MSQDQESPRCTHDQH) show a composition bias toward basic and acidic residues. Disordered regions lie at residues 1–22 (MSQDQESPRCTHDQHLQTFSET) and 39–108 (LSSS…PRNV). The span at 70-81 (SSSIAVTTTSSS) shows a compositional bias: low complexity. Over residues 82 to 95 (ESDEASSNQEEEDS) the composition is skewed to acidic residues. The 200-residue stretch at 113–312 (LDQKVAFLVN…HSFPSQYAEA (200 aa)) folds into the MAGE domain.

This Homo sapiens (Human) protein is Melanoma-associated antigen B16 (MAGEB16).